The following is a 102-amino-acid chain: Protamine-2 (102 aa).

2 disordered regions span residues 1–40 and 67–102; these read MVRY…SPEH and HRQQ…CRRH. Phosphoserine is present on residues Ser8, Ser10, and Ser37.

Belongs to the protamine P2 family. As to quaternary structure, interacts with TDRP. Post-translationally, proteolytic processing into mature chains is required for histone eviction during spermatogenesis. Transition proteins (TNP1 and TNP2) are required for processing. As to expression, testis.

It is found in the nucleus. Its subcellular location is the chromosome. Protamines substitute for histones in the chromatin of sperm during the haploid phase of spermatogenesis. They compact sperm DNA into a highly condensed, stable and inactive complex. This chain is Protamine-2 (PRM2), found in Pan troglodytes (Chimpanzee).